The following is a 95-amino-acid chain: Aspartyl/glutamyl-tRNA(Asn/Gln) amidotransferase subunit C (95 aa).

It belongs to the GatC family. In terms of assembly, heterotrimer of A, B and C subunits.

It carries out the reaction L-glutamyl-tRNA(Gln) + L-glutamine + ATP + H2O = L-glutaminyl-tRNA(Gln) + L-glutamate + ADP + phosphate + H(+). The catalysed reaction is L-aspartyl-tRNA(Asn) + L-glutamine + ATP + H2O = L-asparaginyl-tRNA(Asn) + L-glutamate + ADP + phosphate + 2 H(+). Functionally, allows the formation of correctly charged Asn-tRNA(Asn) or Gln-tRNA(Gln) through the transamidation of misacylated Asp-tRNA(Asn) or Glu-tRNA(Gln) in organisms which lack either or both of asparaginyl-tRNA or glutaminyl-tRNA synthetases. The reaction takes place in the presence of glutamine and ATP through an activated phospho-Asp-tRNA(Asn) or phospho-Glu-tRNA(Gln). In Gluconobacter oxydans (strain 621H) (Gluconobacter suboxydans), this protein is Aspartyl/glutamyl-tRNA(Asn/Gln) amidotransferase subunit C.